The following is a 239-amino-acid chain: Pimeloyl-[acyl-carrier protein] methyl ester esterase (239 aa).

Substrate is bound by residues Trp20, 77 to 78 (SM), and 138 to 142 (FISLQ). Ser77 acts as the Nucleophile in catalysis. Residues Asp192 and His220 contribute to the active site. Position 220 (His220) interacts with substrate.

Belongs to the AB hydrolase superfamily. Carboxylesterase BioH family. As to quaternary structure, monomer.

Its subcellular location is the cytoplasm. The catalysed reaction is 6-carboxyhexanoyl-[ACP] methyl ester + H2O = 6-carboxyhexanoyl-[ACP] + methanol + H(+). Its pathway is cofactor biosynthesis; biotin biosynthesis. Its function is as follows. The physiological role of BioH is to remove the methyl group introduced by BioC when the pimeloyl moiety is complete. It allows to synthesize pimeloyl-ACP via the fatty acid synthetic pathway through the hydrolysis of the ester bonds of pimeloyl-ACP esters. The sequence is that of Pimeloyl-[acyl-carrier protein] methyl ester esterase from Legionella pneumophila (strain Corby).